Consider the following 565-residue polypeptide: Urocanate hydratase (565 aa).

Residues 58-59 (GG), glutamine 136, 182-184 (GMG), glutamate 202, arginine 207, 245-246 (NA), 266-270 (QTSAH), 276-277 (YL), and tyrosine 325 each bind NAD(+). Cysteine 413 is an active-site residue. NAD(+) is bound at residue glycine 495.

This sequence belongs to the urocanase family. The cofactor is NAD(+).

It is found in the cytoplasm. The enzyme catalyses 4-imidazolone-5-propanoate = trans-urocanate + H2O. It functions in the pathway amino-acid degradation; L-histidine degradation into L-glutamate; N-formimidoyl-L-glutamate from L-histidine: step 2/3. In terms of biological role, catalyzes the conversion of urocanate to 4-imidazolone-5-propionate. The sequence is that of Urocanate hydratase from Vibrio vulnificus (strain CMCP6).